The chain runs to 993 residues: Synaptonemal complex protein 1 (993 aa).

Positions 98-108 (PMSRLYSKLYK) match the Mediates head to head self-assembly of N-terminal ends motif. A Nuclear localization signal motif is present at residues 114–117 (KKWK). Coiled coils occupy residues 117 to 172 (KVSI…LIKE) and 215 to 688 (IEKM…EIEN). An interaction with SYCE3 region spans residues 203-359 (ETRQVYVDLN…SQLTEVKEAQ (157 aa)). Residues 694–788 (GKLLGEVEKA…VSLKKQLEIE (95 aa)) form a required for pH-induced assembly of C-terminal ends into antiparallel tetramers region. Positions 697–700 (LGEV) match the Nuclear localization signal motif. Residues 764 to 808 (KIALETELSNIRNELVSLKKQLEIEKEEKEKLKMAKENTAILKDK) adopt a coiled-coil conformation. Residues 801 to 993 (NTAILKDKKD…RLKEAEKLFS (193 aa)) form a DNA-binding region. S820 carries the phosphoserine modification. The segment at 824 to 861 (TSWKFDSKTTPSQNISRLSSSMDSGKSKDNRDNLRASA) is disordered. Over residues 831–847 (KTTPSQNISRLSSSMDS) the composition is skewed to polar residues. Basic and acidic residues predominate over residues 848–857 (GKSKDNRDNL). A Nuclear localization signal motif is present at residues 898-901 (KKRK).

Structural component of synaptonemal complexes. Homotetramer that consists of an N-terminal four-helical bundle that bifurcates into two elongated C-terminal dimeric coiled coils. This tetrameric building block potentially self-assembles into a supramolecular zipper-like lattice to mediate meiotic chromosome synapsis. Self-assembly is likely initiated by local proton density at chromosome axis, which is predicted to trigger antiparallel back to back assembly of adjacent C-terminal ends into tetrameric structures that anchor to chromosomal DNA. Then the N-terminal ends are predicted to undergo cooperative antiparallel head to head assembly at the midline of synaptonemal complexes central element to form a zipper-like lattice between properly aligned homologous chromosomes. The nascent synapsis generated by SYCP1 is stabilized through interaction with central element proteins SYCE1 and SYCE2. Interacts (via tetrameric core) with SYCE3; the interaction remodels SYCP1 homotetramers to 2:1 heterotrimers with SYCE3. SYCP1/SYCE3 heterotrimers form lattice assemblies as part of the mature synaptonemal complex via both lateral and head-to-head interactions. Forms a complex with EWSR1, PRDM9, SYCP3 and REC8; complex formation is dependent of phosphorylated form of REC8 and requires PRDM9 bound to hotspot DNA; EWSR1 joins PRDM9 with the chromosomal axis through REC8. Interacts with SPO16. As to expression, detected in testis. Detected in spermatocytes (at protein level).

It is found in the nucleus. The protein localises to the chromosome. It localises to the centromere. Major component of the transverse filaments of synaptonemal complexes, formed between homologous chromosomes during meiotic prophase. Required for normal assembly of the central element of the synaptonemal complexes. Required for normal centromere pairing during meiosis. Required for normal meiotic chromosome synapsis during oocyte and spermatocyte development and for normal male and female fertility. This is Synaptonemal complex protein 1 from Mus musculus (Mouse).